The following is a 50-amino-acid chain: Thrombin-like enzyme BpirSP27 (50 aa).

Positions 1 to 50 constitute a Peptidase S1 domain; the sequence is VVGGDECNINEHRSLVAIFNSTGFFCSGILLNQEWVLTASHCDSTNFQMK. The N-linked (GlcNAc...) asparagine glycan is linked to asparagine 20. The cysteines at positions 26 and 42 are disulfide-linked. Histidine 41 (charge relay system) is an active-site residue.

Belongs to the peptidase S1 family. Snake venom subfamily. Monomer. In terms of processing, N-glycosylated. As to expression, expressed by the venom gland.

It localises to the secreted. Inhibited by serine protease inhibitors PMSF, benzamidine, leupeptin and aprotinin, as well as by copper (Cu2+) and manganese (Mn2+) ions. Not inhibited by metalloprotease inhibitors EDTA, EGTA and 1,10-phenanthroline, as well as by barium (Ba2+) and calcium ion (Ca2+). Functionally, snake venom serine protease that interferes with the hemostatic system of the prey. It preferentially degrades the Bbeta chain (FGB) of fibrinogen, with minor effects on the Aalpha chain (FGA). It presents a lower ability to degrade fibrin clots than BpirSP41. It hydrolyzes chromogenic substrates S-2238 (used for testing thrombin activity), S-2222 (factor Xa), S-2266 (glandular kallikrein and factor XIa), S-2302 (plasma kallikrein, factor XIa and XIIa), and S-2251 (plasmin). It shows a decrease in the clotting time of human plasma in the presence of increasing doses of the enzyme. Its minimum coagulant dose (MCD) is 3.5 ug. It also promotes platelet aggregation in a concentration-dependent manner in the presence or absence of calcium. It also shows 20% inhibition of the hemolytic activity promoted by the complement pathways and possess only a minor role in the induction of edema and pain in rat. The polypeptide is Thrombin-like enzyme BpirSP27 (Bothrops pirajai (Piraja's lancehead)).